The primary structure comprises 546 residues: MTSKESICWYLANILLVTCIGYYSYKTPFTKVEESFAMQAIHDIQTYRWDLSKYDHLEFPGAVKRSFIPSLFIAVLSYIPSWFVNPLLAARWTIGYLSWESMNSVSCSISKRFGTLSGALFILFSCAQFHLVYYMSRPLSNIFGLIATNHSLSLLLKNNYYGSISILVFAAAIVRSEIALLLMCLILPLLLQRRITLSKLLLVGISSSLAAVGASFLIDSYFWGAWCWPELEAFLFNVVEGKSSDWGTSPFYYYFVRLPWLFLNPTTLLFLLISFVYIKPARLLIYVPLFFIFVYSFLGHKEWRFIIYSIPWFNAASAIGASLCFNASKFGKKIFEILRLMFFSGIIFGFIGSSFLLYVFQYAYPGGLALTRLYEIENHPQVSVHMDVYPCMTGITRFSQLPSWYYDKTEDPKMLSNSLFISQFDYLITEDPESYNDTFDVIESVNSNTKIPILPKWLSNHIPREISIRNPAQPVYILANKKARATKPAAVDDYSSFIGHKVDEIKLWPPIYRVVSPDTLLTRDYREDRLNFFIDKDRILTHITQG.

9 helical membrane-spanning segments follow: residues E5–Y25, F67–L87, F113–Y133, I166–I186, L200–S220, L258–I278, L283–W303, F305–F325, and L340–F360.

Belongs to the glycosyltransferase 22 family.

It is found in the endoplasmic reticulum membrane. The enzyme catalyses an alpha-D-Man-(1-&gt;2)-alpha-D-Man-(1-&gt;2)-alpha-D-Man-(1-&gt;3)-[alpha-D-Man-(1-&gt;2)-alpha-D-Man-(1-&gt;3)-alpha-D-Man-(1-&gt;6)]-beta-D-Man-(1-&gt;4)-beta-D-GlcNAc-(1-&gt;4)-alpha-D-GlcNAc-diphospho-di-trans,poly-cis-dolichol + a di-trans,poly-cis-dolichyl beta-D-mannosyl phosphate = an alpha-D-Man-(1-&gt;2)-alpha-D-Man-(1-&gt;2)-alpha-D-Man-(1-&gt;3)-[alpha-D-Man-(1-&gt;2)-alpha-D-Man-(1-&gt;3)-[alpha-D-Man-(1-&gt;6)]-alpha-D-Man-(1-&gt;6)]-beta-D-Man-(1-&gt;4)-beta-D-GlcNAc-(1-&gt;4)-alpha-D-GlcNAc-diphospho-di-trans,poly-cis-dolichol + a di-trans,poly-cis-dolichyl phosphate + H(+). The protein operates within protein modification; protein glycosylation. Its function is as follows. Mannosyltransferase that operates in the biosynthetic pathway of dolichol-linked oligosaccharides, the glycan precursors employed in protein asparagine (N)-glycosylation. The assembly of dolichol-linked oligosaccharides begins on the cytosolic side of the endoplasmic reticulum membrane and finishes in its lumen. The sequential addition of sugars to dolichol pyrophosphate produces dolichol-linked oligosaccharides containing fourteen sugars, including two GlcNAcs, nine mannoses and three glucoses. Once assembled, the oligosaccharide is transferred from the lipid to nascent proteins by oligosaccharyltransferases. In the lumen of the endoplasmic reticulum, adds the eighth mannose residue in an alpha-1,6 linkage onto Man(7)GlcNAc(2)-PP-dolichol to produce Man(8)GlcNAc(2)-PP-dolichol. The protein is Probable Dol-P-Man:Man(7)GlcNAc(2)-PP-Dol alpha-1,6-mannosyltransferase (alg12) of Schizosaccharomyces pombe (strain 972 / ATCC 24843) (Fission yeast).